A 174-amino-acid polypeptide reads, in one-letter code: Methylated protein MJ0556 (174 aa).

CBS domains are found at residues 28–87 and 91–156; these read MISG…YLNV and MLKN…IIKE.

Post-translationally, methylated at an undetermined residue between Ser-2 and Asp-26.

The polypeptide is Methylated protein MJ0556 (Methanocaldococcus jannaschii (strain ATCC 43067 / DSM 2661 / JAL-1 / JCM 10045 / NBRC 100440) (Methanococcus jannaschii)).